The chain runs to 431 residues: MESWQAPDLKRLGGQAVPLRLYDTARQAVHATEPHPDGARMYVCGITPYDATHLGHAATMVTFDVINRVWRDNGHDVAYVQNVTDVDEPLFERAERDGEDWVVLGMRETALFREDMEALSIIPPKAYVGAVESMPTIAALVERLVDAGAAYTVDDGTGDVYFPVTATEGFGSESHYDRDTMLRFFGERGGDPDRSGKRDPLDALLWRGEREGEPSWESRLGRGRPGWHIECAAIALAHLGDRIDVNGGGNDLIFPHHEFSAAHAEAATKAVPFAKHYVHAGMIGLDGEKMSKSRGNLVFVSRLRADGVDPAVIRLALLDGHYREDRPWTAELHAAAADRLARWREAMGMSSGASGTTTAQRVRERLSDDLDTPGALRAVDEWAAASLTGAHHDAHAPALVRDTVESLLGVTLLRAVFRQRTTSATTLDRSR.

Cys44 serves as a coordination point for Zn(2+). L-cysteinyl-5'-AMP-binding positions include 44–47 (CGIT), Thr59, and 82–84 (NVT). The 'HIGH' region motif lies at 46–56 (ITPYDATHLGH). The 'ERGGDP' region signature appears at 187-192 (ERGGDP). Residue Trp227 participates in L-cysteinyl-5'-AMP binding. Cys231 contributes to the Zn(2+) binding site. 249 to 251 (GND) lines the L-cysteinyl-5'-AMP pocket. His256 is a Zn(2+) binding site. Ile283 is an L-cysteinyl-5'-AMP binding site. Residues 289–293 (KMSKS) carry the 'KMSKS' region motif.

It belongs to the class-I aminoacyl-tRNA synthetase family. MshC subfamily. In terms of assembly, monomer. Requires Zn(2+) as cofactor.

It carries out the reaction 1D-myo-inositol 2-amino-2-deoxy-alpha-D-glucopyranoside + L-cysteine + ATP = 1D-myo-inositol 2-(L-cysteinylamino)-2-deoxy-alpha-D-glucopyranoside + AMP + diphosphate + H(+). Its function is as follows. Catalyzes the ATP-dependent condensation of GlcN-Ins and L-cysteine to form L-Cys-GlcN-Ins. The polypeptide is L-cysteine:1D-myo-inositol 2-amino-2-deoxy-alpha-D-glucopyranoside ligase (Stackebrandtia nassauensis (strain DSM 44728 / CIP 108903 / NRRL B-16338 / NBRC 102104 / LLR-40K-21)).